The following is a 425-amino-acid chain: MTAIIDIVGREILDSRGNPTVEVDVVLEDGSFGRAAVPSGASTGAHEAVELRDGGSRYLGKGVEKAVEAVNGKIFDAIAGMDAESQLLIDQTMIELDGSANKGNIGANAILGVSLAVAKAAAQATGLPLYRYVGGANAHVLPVPMMNIINGGAHADNPIDFQEFMILPVGASSVREAVRYGSEVFHTLKKRLKDAGHNTNVGDEGGFAPNLKNAQAALDFIMESIEKAGFKPGEDIALGLDCAATEFFKDGNYVYEGERKTRDPKAQAKYLAKLASDYPIVTIEDGMAEDDWEGWKYLTDLIGDKCQLVGDDLFVTNSARLRDGIRMGVANSILVKVNQIGSLSETLDAVETAHKAGYTAVMSHRSGETEDSTIADLAVATNCGQIKTGSLARSDRTAKYNQLIRIEEELGKQARYAGRNALKFL.

A (2R)-2-phosphoglycerate-binding site is contributed by Gln-162. The Proton donor role is filled by Glu-204. Mg(2+)-binding residues include Asp-241, Glu-284, and Asp-311. (2R)-2-phosphoglycerate contacts are provided by Lys-336, Arg-365, Ser-366, and Lys-387. The active-site Proton acceptor is Lys-336.

This sequence belongs to the enolase family. Mg(2+) is required as a cofactor.

The protein resides in the cytoplasm. It is found in the secreted. Its subcellular location is the cell surface. It carries out the reaction (2R)-2-phosphoglycerate = phosphoenolpyruvate + H2O. It participates in carbohydrate degradation; glycolysis; pyruvate from D-glyceraldehyde 3-phosphate: step 4/5. Catalyzes the reversible conversion of 2-phosphoglycerate (2-PG) into phosphoenolpyruvate (PEP). It is essential for the degradation of carbohydrates via glycolysis. This chain is Enolase, found in Brucella anthropi (strain ATCC 49188 / DSM 6882 / CCUG 24695 / JCM 21032 / LMG 3331 / NBRC 15819 / NCTC 12168 / Alc 37) (Ochrobactrum anthropi).